The primary structure comprises 460 residues: Argininosuccinate lyase (460 aa).

This sequence belongs to the lyase 1 family. Argininosuccinate lyase subfamily.

The protein resides in the cytoplasm. It carries out the reaction 2-(N(omega)-L-arginino)succinate = fumarate + L-arginine. The protein operates within amino-acid biosynthesis; L-arginine biosynthesis; L-arginine from L-ornithine and carbamoyl phosphate: step 3/3. In Staphylococcus haemolyticus (strain JCSC1435), this protein is Argininosuccinate lyase.